A 183-amino-acid chain; its full sequence is Peptide deformylase (183 aa).

The Fe cation site is built by Cys-110 and His-153. Residue Glu-154 is part of the active site. His-157 serves as a coordination point for Fe cation.

The protein belongs to the polypeptide deformylase family. The cofactor is Fe(2+).

It carries out the reaction N-terminal N-formyl-L-methionyl-[peptide] + H2O = N-terminal L-methionyl-[peptide] + formate. In terms of biological role, removes the formyl group from the N-terminal Met of newly synthesized proteins. Requires at least a dipeptide for an efficient rate of reaction. N-terminal L-methionine is a prerequisite for activity but the enzyme has broad specificity at other positions. The chain is Peptide deformylase from Listeria welshimeri serovar 6b (strain ATCC 35897 / DSM 20650 / CCUG 15529 / CIP 8149 / NCTC 11857 / SLCC 5334 / V8).